We begin with the raw amino-acid sequence, 132 residues long: Small ribosomal subunit protein uS8 (132 aa).

It belongs to the universal ribosomal protein uS8 family. As to quaternary structure, part of the 30S ribosomal subunit. Contacts proteins S5 and S12.

Its function is as follows. One of the primary rRNA binding proteins, it binds directly to 16S rRNA central domain where it helps coordinate assembly of the platform of the 30S subunit. In Kocuria rhizophila (strain ATCC 9341 / DSM 348 / NBRC 103217 / DC2201), this protein is Small ribosomal subunit protein uS8.